We begin with the raw amino-acid sequence, 365 residues long: Isoflavone 4'-O-methyltransferase (365 aa).

Residues Val207–Gly210, Asp231, Asp231–Gln232, Asp251–Met252, and Lys265 contribute to the S-adenosyl-L-methionine site. The Proton acceptor role is filled by His269.

Belongs to the class I-like SAM-binding methyltransferase superfamily. Cation-independent O-methyltransferase family. COMT subfamily.

The catalysed reaction is a 4'-hydroxyisoflavone + S-adenosyl-L-methionine = a 4'-methoxyisoflavone + S-adenosyl-L-homocysteine + H(+). It carries out the reaction (2R,3S)-2,4',7-trihydroxyisoflavanone + S-adenosyl-L-methionine = (2R,3S)-2,7-dihydroxy-4'-methoxyisoflavanone + S-adenosyl-L-homocysteine + H(+). 2-hydroxyisoflavanone 4'-O-methyltransferase involved in the biosynthesis of formononetin. Can use 2,7,4'-trihydroxyisoflavanone as substrate, but not daidzein. In Lotus japonicus (Lotus corniculatus var. japonicus), this protein is Isoflavone 4'-O-methyltransferase (HI4'OMT).